Reading from the N-terminus, the 81-residue chain is Photosystem I iron-sulfur center (81 aa).

4Fe-4S ferredoxin-type domains follow at residues 2-31 (SHAV…MVPW) and 39-68 (IASS…IRVY). Residues cysteine 11, cysteine 14, cysteine 17, cysteine 21, cysteine 48, cysteine 51, cysteine 54, and cysteine 58 each contribute to the [4Fe-4S] cluster site.

The cyanobacterial PSI reaction center is composed of one copy each of PsaA,B,C,D,E,F,I,J,K,L,M and X, and forms trimeric complexes. It depends on [4Fe-4S] cluster as a cofactor.

The protein resides in the cellular thylakoid membrane. The catalysed reaction is reduced [plastocyanin] + hnu + oxidized [2Fe-2S]-[ferredoxin] = oxidized [plastocyanin] + reduced [2Fe-2S]-[ferredoxin]. In terms of biological role, apoprotein for the two 4Fe-4S centers FA and FB of photosystem I (PSI); essential for photochemical activity. FB is the terminal electron acceptor of PSI, donating electrons to ferredoxin. The C-terminus interacts with PsaA/B/D and helps assemble the protein into the PSI complex. Required for binding of PsaD and PsaE to PSI. PSI is a plastocyanin/cytochrome c6-ferredoxin oxidoreductase, converting photonic excitation into a charge separation, which transfers an electron from the donor P700 chlorophyll pair to the spectroscopically characterized acceptors A0, A1, FX, FA and FB in turn. In Prochlorococcus marinus (strain MIT 9211), this protein is Photosystem I iron-sulfur center.